Here is a 131-residue protein sequence, read N- to C-terminus: Small ribosomal subunit protein uS8 (131 aa).

The protein belongs to the universal ribosomal protein uS8 family. As to quaternary structure, part of the 30S ribosomal subunit. Contacts proteins S5 and S12.

Functionally, one of the primary rRNA binding proteins, it binds directly to 16S rRNA central domain where it helps coordinate assembly of the platform of the 30S subunit. This chain is Small ribosomal subunit protein uS8, found in Polaromonas sp. (strain JS666 / ATCC BAA-500).